A 258-amino-acid polypeptide reads, in one-letter code: uncharacterized protein (258 aa).

4 helical membrane passes run 33 to 53 (LFVI…VTTN), 59 to 79 (FDSW…IFVF), 88 to 108 (LLYL…FSFF), and 140 to 160 (IIAL…WLIQ). A disordered region spans residues 237–258 (NNKINSELQPPSILNKNSKPIE). Polar residues predominate over residues 242 to 258 (SELQPPSILNKNSKPIE).

The protein resides in the membrane. This is an uncharacterized protein from Dictyostelium discoideum (Social amoeba).